We begin with the raw amino-acid sequence, 500 residues long: Maturase K (500 aa).

It belongs to the intron maturase 2 family. MatK subfamily.

The protein resides in the plastid. It is found in the chloroplast. Its function is as follows. Usually encoded in the trnK tRNA gene intron. Probably assists in splicing its own and other chloroplast group II introns. The polypeptide is Maturase K (Brasenia schreberi (Water shield)).